The primary structure comprises 377 residues: Succinyl-diaminopimelate desuccinylase (377 aa).

Residue H66 coordinates Zn(2+). D68 is an active-site residue. A Zn(2+)-binding site is contributed by D99. The active-site Proton acceptor is E133. E134, E162, and H348 together coordinate Zn(2+).

It belongs to the peptidase M20A family. DapE subfamily. In terms of assembly, homodimer. The cofactor is Zn(2+). Co(2+) is required as a cofactor.

The catalysed reaction is N-succinyl-(2S,6S)-2,6-diaminopimelate + H2O = (2S,6S)-2,6-diaminopimelate + succinate. The protein operates within amino-acid biosynthesis; L-lysine biosynthesis via DAP pathway; LL-2,6-diaminopimelate from (S)-tetrahydrodipicolinate (succinylase route): step 3/3. In terms of biological role, catalyzes the hydrolysis of N-succinyl-L,L-diaminopimelic acid (SDAP), forming succinate and LL-2,6-diaminopimelate (DAP), an intermediate involved in the bacterial biosynthesis of lysine and meso-diaminopimelic acid, an essential component of bacterial cell walls. This Xylella fastidiosa (strain 9a5c) protein is Succinyl-diaminopimelate desuccinylase.